A 1711-amino-acid polypeptide reads, in one-letter code: Protein chiffon (1711 aa).

Disordered regions lie at residues 1–31 (MQPQ…AATP), 87–129 (KPEV…SRAD), and 244–307 (TKSK…IDSS). Positions 1 to 400 (MQPQSDKQSA…PALREKSKRI (400 aa)) are sufficient for interaction with and activation of Cdc7. Low complexity-rich tracts occupy residues 10–30 (ASRL…TAAT) and 97–109 (TPGT…TPTS). A phosphoserine mark is found at serine 306 and serine 307. The segment at 307–356 (SEKQGGVCEICKLEYDILNIHLQSKDHELFAKNSDNFLALDTLIQSSADV) adopts a DBF4-type zinc-finger fold. Zn(2+) contacts are provided by cysteine 314, cysteine 317, histidine 327, and histidine 333. A compositionally biased stretch (acidic residues) spans 365 to 378 (VESELDMDVDESLS). Disordered stretches follow at residues 365-507 (VESE…DSPS), 531-647 (MFPR…KPQL), 733-771 (LDEE…REQR), 791-817 (TEVK…KVKQ), 908-945 (QDKG…YKNK), 1005-1025 (RSTS…CRNK), 1055-1157 (QRQD…RNQS), 1271-1290 (ESEG…PPTD), 1303-1329 (MGSA…RMSN), 1343-1370 (LKSN…ALPD), and 1383-1644 (LHPI…SKYA). Residues serine 406, serine 407, serine 417, serine 432, and serine 435 each carry the phosphoserine modification. The span at 429–439 (QGNSPGSLSEL) shows a compositional bias: polar residues. The span at 445-454 (PTTAAATPTT) shows a compositional bias: low complexity. The residue at position 467 (serine 467) is a Phosphoserine. The segment at residues 493-505 (PRGRGRPPNQVDS) is a DNA-binding region (a.T hook). Residues 537–546 (VPTTRSSSEL) are compositionally biased toward polar residues. Residues serine 542, serine 543, and serine 544 each carry the phosphoserine modification. Basic and acidic residues predominate over residues 549–560 (DVDRQTTSDVRG). Positions 563–575 (SISSASLDTSTSE) are enriched in low complexity. Over residues 588–601 (IRKRAQAVGRRRKV) the composition is skewed to basic residues. Residues 793 to 812 (VKTSPSKSRTKIQKPSSPTK) are compositionally biased toward polar residues. Over residues 908–932 (QDKGEQIKLEDQKPAPKKEVKKEEE) the composition is skewed to basic and acidic residues. Residues 1006-1018 (STSSSSCSNSQRS) are compositionally biased toward low complexity. Threonine 1081 bears the Phosphothreonine mark. Residues serine 1091 and serine 1092 each carry the phosphoserine modification. Residues 1092-1101 (SPRTTRSQAA) show a composition bias toward polar residues. Residues 1398–1407 (TTTTTTTTTT) are compositionally biased toward low complexity. Residues 1400-1695 (TTTTTTTTSA…NAWRRTQRRA (296 aa)) form a sufficient for interaction with Gcn5 region. A compositionally biased stretch (basic and acidic residues) spans 1435–1445 (ADDKQNSREDA). Composition is skewed to acidic residues over residues 1453–1475 (DVDE…DETM) and 1483–1518 (QDVE…EEQD). 2 stretches are compositionally biased toward polar residues: residues 1536 to 1545 (ISVTTPPEDS) and 1556 to 1591 (HNGQ…SCIS).

Component of the Dbf4-dependent kinase (DDK) complex consisting of Cdc7 and the Dbf4 ortholog chif. Interacts with Cdc7; the interaction is direct. Interacts with CG5790. As to quaternary structure, component of the Chiffon histone acetyltransferase (CHAT) complex consisting of Ada3, Sgf29, Gcn5, chif/chiffon and Ada2b (Isoform A). Interacts (via C-terminus) with Gcn5; the interaction is direct but weak in the absence of other CHAT components. May be proteolytically cleaved to produce a N-terminal 50 kDa product.

The protein resides in the nucleus. Functionally, a bicistronic gene producing two proteins that are components of different complexes and have separate properties and functions. Full-length protein is proteolytically cleaved, producing a ~50kDa N-terminal product (Chiffon-A) that forms part of the DDK complex; it is unclear if the C-terminal proteolytic product is stable or functional. Alternative initiation from an internal ribosome entry site produces a C-terminal ~48kDa product (Chiffon-B or Isoform E) that forms part of the CHAT complex. Involved in regulation of gene expression during embryonic development. In terms of biological role, regulatory component of the Dbf4-dependent kinase (DDK) complex. Required for the amplification stage, but not the preceding endoreplication stage of DNA replication in egg chamber follicle cells of the ovary. May be involved in initiation of DNA replication; activation of the chorion gene origins. May have a role in eye and thoracic bristle development. Required for female fertility; is not required for oogenesis but is required maternally for early embryo development. Its function is as follows. Component of the CHAT histone acetyltransferase complex, which predominantly acetylates histone H3. As part of the CHAT complex involved in acetylation of histone H3 on 'Lys-10' (H3K9ac), 'Lys-15' (H3K14ac) and 'Lys-19' (H3K18ac), but not 'Lys-25' (H3K24ac). May also regulate other histone acetyltransferase complexes. Essential for viability. Not required for early stages of embryonic development. May be involved in zygotic genome activation during embryogenesis. The protein is Protein chiffon of Drosophila melanogaster (Fruit fly).